The chain runs to 275 residues: Large ribosomal subunit protein uL2 (275 aa).

Disordered regions lie at residues 36 to 55 (PKKR…RHKG) and 223 to 275 (VVMN…RHAR).

It belongs to the universal ribosomal protein uL2 family. In terms of assembly, part of the 50S ribosomal subunit. Forms a bridge to the 30S subunit in the 70S ribosome.

In terms of biological role, one of the primary rRNA binding proteins. Required for association of the 30S and 50S subunits to form the 70S ribosome, for tRNA binding and peptide bond formation. It has been suggested to have peptidyltransferase activity; this is somewhat controversial. Makes several contacts with the 16S rRNA in the 70S ribosome. This is Large ribosomal subunit protein uL2 from Thiobacillus denitrificans (strain ATCC 25259 / T1).